The chain runs to 72 residues: Subtilisin-chymotrypsin inhibitor-2B (72 aa).

It belongs to the protease inhibitor I13 (potato type I serine protease inhibitor) family.

In terms of biological role, inhibits both subtilisin and chymotrypsin. This is Subtilisin-chymotrypsin inhibitor-2B from Hordeum vulgare (Barley).